The following is a 547-amino-acid chain: ATP synthase subunit alpha (547 aa).

An ATP-binding site is contributed by 172 to 179 (GDRKTGKT).

Belongs to the ATPase alpha/beta chains family. As to quaternary structure, F-type ATPases have 2 components, CF(1) - the catalytic core - and CF(0) - the membrane proton channel. CF(1) has five subunits: alpha(3), beta(3), gamma(1), delta(1), epsilon(1). CF(0) has three main subunits: a(1), b(2) and c(9-12). The alpha and beta chains form an alternating ring which encloses part of the gamma chain. CF(1) is attached to CF(0) by a central stalk formed by the gamma and epsilon chains, while a peripheral stalk is formed by the delta and b chains.

Its subcellular location is the cell membrane. It carries out the reaction ATP + H2O + 4 H(+)(in) = ADP + phosphate + 5 H(+)(out). Produces ATP from ADP in the presence of a proton gradient across the membrane. The alpha chain is a regulatory subunit. This chain is ATP synthase subunit alpha, found in Rhodococcus jostii (strain RHA1).